A 353-amino-acid polypeptide reads, in one-letter code: UPF0283 membrane protein CKO_01392 (353 aa).

3 consecutive transmembrane segments (helical) span residues 70–90 (MVMGGLALFGVSVVGQGVQWT), 99–119 (WVALGGCAAGALIIGAGVGSV), and 213–233 (ESTLMIAVSPLALVDMAFIAW).

This sequence belongs to the UPF0283 family.

The protein localises to the cell inner membrane. The polypeptide is UPF0283 membrane protein CKO_01392 (Citrobacter koseri (strain ATCC BAA-895 / CDC 4225-83 / SGSC4696)).